Reading from the N-terminus, the 1213-residue chain is A disintegrin and metalloproteinase with thrombospondin motifs 19 (1213 aa).

The signal sequence occupies residues 1–27; sequence MGKNREMRLTHICCCCLLYQLGFLSNG. A propeptide spanning residues 28–322 is cleaved from the precursor; it reads IVSELQFAPD…KIAESGRGKR (295 aa). Disordered regions lie at residues 49–161 and 192–215; these read WRRE…PPPA and FLAP…AASA. The span at 52-71 shows a compositional bias: gly residues; that stretch reads EPVDPAGGSGGSADPGWVRG. Residues 110-119 are compositionally biased toward acidic residues; that stretch reads RPPPPSEGEE. The span at 120–139 shows a compositional bias: low complexity; sequence DEELESQELPRGSSGAAALS. Residues 140–155 show a composition bias toward pro residues; it reads PGAPASWQPPPPPQPP. N266 carries an N-linked (GlcNAc...) asparagine glycan. The Cysteine switch motif lies at 298-305; the sequence is HYCGIISD. C300 contributes to the Zn(2+) binding site. A Peptidase M12B domain is found at 331–551; it reads YNIETVVVAD…KASNCLLQTN (221 aa). 11 disulfides stabilise this stretch: C407–C472, C447–C454, C466–C546, C505–C530, C575–C599, C586–C607, C594–C626, C620–C631, C651–C686, C655–C691, and C666–C676. Zn(2+) is bound at residue H488. The active site involves E489. Zn(2+) contacts are provided by H492 and H498. One can recognise a Disintegrin domain in the interval 552 to 639; it reads PQSVNSVMVP…ECTSRTSAPE (88 aa). A TSP type-1 1 domain is found at 640 to 692; that stretch reads HLAGEWSLWSPCSRTCSAGISSRERKCPGLDSEARDCNGPRKQYRICENPPCP. The segment at 797–920 is spacer; sequence IIKGDFNHTR…PENQSSKAPE (124 aa). 4 N-linked (GlcNAc...) asparagine glycosylation sites follow: N803, N913, N955, and N1015. 4 consecutive TSP type-1 domains span residues 921-981, 982-1043, 1045-1089, and 1093-1150; these read PLFM…NEQP, CQTR…QDCM, VWEA…EDCE, and KCYV…QPCN. Disulfide bonds link C994–C1037, C998–C1042, and C1009–C1026. The PLAC domain maps to 1166 to 1205; it reads LTFKCLGDQWPVYCRVIREKNLCQDMRWYQRCCETCRDFY.

It depends on Zn(2+) as a cofactor. In terms of processing, the precursor is cleaved by a furin endopeptidase. Post-translationally, glycosylated. Can be O-fucosylated by POFUT2 on a serine or a threonine residue found within the consensus sequence C1-X(2)-(S/T)-C2-G of the TSP type-1 repeat domains where C1 and C2 are the first and second cysteine residue of the repeat, respectively. Fucosylated repeats can then be further glycosylated by the addition of a beta-1,3-glucose residue by the glucosyltransferase, B3GALTL. Fucosylation mediates the efficient secretion of ADAMTS family members. Can also be C-glycosylated with one or two mannose molecules on tryptophan residues within the consensus sequence W-X-X-W of the TPRs, and N-glycosylated. These other glycosylations can also facilitate secretion. Expressed in fetal lung, but not in any adult tissues examined. Expression was detected in an osteosarcoma cDNA library.

Its subcellular location is the secreted. The protein resides in the extracellular space. It is found in the extracellular matrix. In Homo sapiens (Human), this protein is A disintegrin and metalloproteinase with thrombospondin motifs 19 (ADAMTS19).